Here is a 323-residue protein sequence, read N- to C-terminus: Prenyl transferase (323 aa).

Isopentenyl diphosphate contacts are provided by lysine 46, arginine 49, and histidine 81. Aspartate 88 and aspartate 92 together coordinate Mg(2+). Arginine 97 contacts an all-trans-polyprenyl diphosphate. Arginine 98 serves as a coordination point for isopentenyl diphosphate. 3 residues coordinate an all-trans-polyprenyl diphosphate: lysine 174, threonine 175, and glutamine 212.

Belongs to the FPP/GGPP synthase family. The cofactor is Mg(2+).

It localises to the plastid. The protein resides in the cyanelle. Its function is as follows. Possible role in synthesis of the nonaprenyl side chain of plastoquinone or in synthesis of other prenyl chains such as undekaprenyl pyrophosphate. In Cyanophora paradoxa, this protein is Prenyl transferase (preA).